A 435-amino-acid chain; its full sequence is 5-methylthioadenosine/S-adenosylhomocysteine deaminase (435 aa).

Zn(2+) contacts are provided by H65 and H67. Substrate contacts are provided by E94, R150, and H189. H216 is a binding site for Zn(2+). Substrate is bound by residues E219 and D304. Residue D304 participates in Zn(2+) binding.

It belongs to the metallo-dependent hydrolases superfamily. MTA/SAH deaminase family. The cofactor is Zn(2+).

It carries out the reaction S-adenosyl-L-homocysteine + H2O + H(+) = S-inosyl-L-homocysteine + NH4(+). The catalysed reaction is S-methyl-5'-thioadenosine + H2O + H(+) = S-methyl-5'-thioinosine + NH4(+). Its function is as follows. Catalyzes the deamination of 5-methylthioadenosine and S-adenosyl-L-homocysteine into 5-methylthioinosine and S-inosyl-L-homocysteine, respectively. Is also able to deaminate adenosine. The sequence is that of 5-methylthioadenosine/S-adenosylhomocysteine deaminase from Bacillus cereus (strain 03BB102).